The following is a 185-amino-acid chain: Ribosome-recycling factor (185 aa).

It belongs to the RRF family.

It localises to the cytoplasm. In terms of biological role, responsible for the release of ribosomes from messenger RNA at the termination of protein biosynthesis. May increase the efficiency of translation by recycling ribosomes from one round of translation to another. The protein is Ribosome-recycling factor of Beutenbergia cavernae (strain ATCC BAA-8 / DSM 12333 / CCUG 43141 / JCM 11478 / NBRC 16432 / NCIMB 13614 / HKI 0122).